We begin with the raw amino-acid sequence, 333 residues long: Ketol-acid reductoisomerase (NADP(+)) (333 aa).

The 171-residue stretch at 1–171 folds into the KARI N-terminal Rossmann domain; that stretch reads MSNDTQPKIA…GGARANIIKT (171 aa). Residues 14 to 17, R37, T42, and 72 to 75 each bind NADP(+); these read YGSQ and DMVQ. The active site involves H97. An NADP(+)-binding site is contributed by G123. The KARI C-terminal knotted domain occupies 172–317; it reads TFKEETETDL…KKLRAKMVWL (146 aa). Mg(2+)-binding residues include D180, E184, E216, and E220. S241 lines the substrate pocket.

The protein belongs to the ketol-acid reductoisomerase family. Mg(2+) serves as cofactor.

The enzyme catalyses (2R)-2,3-dihydroxy-3-methylbutanoate + NADP(+) = (2S)-2-acetolactate + NADPH + H(+). It catalyses the reaction (2R,3R)-2,3-dihydroxy-3-methylpentanoate + NADP(+) = (S)-2-ethyl-2-hydroxy-3-oxobutanoate + NADPH + H(+). The protein operates within amino-acid biosynthesis; L-isoleucine biosynthesis; L-isoleucine from 2-oxobutanoate: step 2/4. It functions in the pathway amino-acid biosynthesis; L-valine biosynthesis; L-valine from pyruvate: step 2/4. Involved in the biosynthesis of branched-chain amino acids (BCAA). Catalyzes an alkyl-migration followed by a ketol-acid reduction of (S)-2-acetolactate (S2AL) to yield (R)-2,3-dihydroxy-isovalerate. In the isomerase reaction, S2AL is rearranged via a Mg-dependent methyl migration to produce 3-hydroxy-3-methyl-2-ketobutyrate (HMKB). In the reductase reaction, this 2-ketoacid undergoes a metal-dependent reduction by NADPH to yield (R)-2,3-dihydroxy-isovalerate. This Xanthomonas euvesicatoria pv. vesicatoria (strain 85-10) (Xanthomonas campestris pv. vesicatoria) protein is Ketol-acid reductoisomerase (NADP(+)).